A 222-amino-acid polypeptide reads, in one-letter code: Charged multivesicular body protein 3 (222 aa).

Gly2 is lipidated: N-myristoyl glycine. The interval 2-113 (GLFGKTQEKP…LQKSTEVMKA (112 aa)) is intramolecular interaction with C-terminus. Residues 22–54 (KIRKEMRVVDRQIRDIQREEEKVKRSVKDAAKK) are a coiled coil. Important for autoinhibitory function regions lie at residues 59–64 (VCVVLA) and 168–169 (IL). Residues 149–222 (ESMDDQEEME…MQSRLATLRS (74 aa)) adopt a coiled-coil conformation. The interval 151–220 (MDDQEEMEEA…EAMQSRLATL (70 aa)) is intramolecular interaction with N-terminus. Residues 151 to 222 (MDDQEEMEEA…MQSRLATLRS (72 aa)) form an interaction with VPS4A region. Residue Lys179 forms a Glycyl lysine isopeptide (Lys-Gly) (interchain with G-Cter in ubiquitin) linkage. The disordered stretch occupies residues 180-222 (APSKVTDALPEPEPLGAMAASEDEEEEEEALEAMQSRLATLRS). Interaction with STAMBP stretches follow at residues 196–222 (AMAA…TLRS), 203–207 (EEEEE), and 221–222 (RS). Ser200 carries the phosphoserine modification. Residues 200–210 (SEDEEEEEEAL) are compositionally biased toward acidic residues. The MIT-interacting motif signature appears at 201–211 (EDEEEEEEALE).

It belongs to the SNF7 family. Probable core component of the endosomal sorting required for transport complex III (ESCRT-III). ESCRT-III components are thought to multimerize to form a flat lattice on the perimeter membrane of the endosome. Several assembly forms of ESCRT-III may exist that interact and act sequentially. Forms a metastable monomer in solution; its core structure (without part of the putative autoinhibitory C-terminal acidic region) oligomerizes into a flat lattice via two different dimerization interfaces. In vitro, heteromerizes with CHMP2A (but not CHMP4) to form helical tubular structures that expose membrane-interacting sites on the outside whereas VPS4B can associate on the inside of the tubule. May interact with IGFBP7; the relevance of such interaction however remains unclear. Interacts with CHMP2A. Interacts with CHMP4A; the interaction requires the release of CHMP4A autoinhibition. Interacts with VPS4A. Interacts with STAMBP; the interaction appears to relieve the autoinhibition of CHMP3. Interacts with VTA1.

It is found in the cytoplasm. Its subcellular location is the cytosol. The protein localises to the membrane. It localises to the endosome. The protein resides in the late endosome membrane. Probable core component of the endosomal sorting required for transport complex III (ESCRT-III) which is involved in multivesicular bodies (MVBs) formation and sorting of endosomal cargo proteins into MVBs. MVBs contain intraluminal vesicles (ILVs) that are generated by invagination and scission from the limiting membrane of the endosome and mostly are delivered to lysosomes enabling degradation of membrane proteins, such as stimulated growth factor receptors, lysosomal enzymes and lipids. The MVB pathway appears to require the sequential function of ESCRT-O, -I,-II and -III complexes. ESCRT-III proteins mostly dissociate from the invaginating membrane before the ILV is released. The ESCRT machinery also functions in topologically equivalent membrane fission events, such as the terminal stages of cytokinesis and the budding of enveloped viruses (lentiviruses). ESCRT-III proteins are believed to mediate the necessary vesicle extrusion and/or membrane fission activities, possibly in conjunction with the AAA ATPase VPS4. Selectively binds to phosphatidylinositol 3,5-bisphosphate PtdIns(3,5)P2 and PtdIns(3,4)P2 in preference to other phosphoinositides tested. Involved in late stages of cytokinesis. Plays a role in endosomal sorting/trafficking of EGF receptor. The sequence is that of Charged multivesicular body protein 3 (CHMP3) from Bos taurus (Bovine).